Consider the following 185-residue polypeptide: Inner membrane lipoprotein DcrB (185 aa).

A signal peptide spans 1–19 (MRNLVKYVGIGLLVMGLAA). The N-palmitoyl cysteine moiety is linked to residue cysteine 20. Cysteine 20 is lipidated: S-diacylglycerol cysteine.

Belongs to the DcrB family.

The protein localises to the cell membrane. Functionally, plays a role in cell envelope biogenesis, maintenance of cell envelope integrity and membrane homeostasis. Essential for lipoprotein maturation under conditions where membrane fluidity may be altered. The protein is Inner membrane lipoprotein DcrB of Shigella flexneri.